The following is a 317-amino-acid chain: Tenomodulin (317 aa).

Residues 1 to 30 (MAKNPPENCEGCHILNAEALKSKKIRKSLK) lie on the Cytoplasmic side of the membrane. A helical; Signal-anchor for type II membrane protein membrane pass occupies residues 31–50 (ICGLVFGILALTLIVLFWGS). Over 51–317 (KHFWPEVSKK…WWVARMLGRV (267 aa)) the chain is Extracellular. The BRICHOS domain maps to 93 to 186 (GNGTDETLEV…ICDNVTMYWI (94 aa)). The N-linked (GlcNAc...) asparagine glycan is linked to Asn-94. Cys-120 and Cys-178 are oxidised to a cystine. N-linked (GlcNAc...) asparagine glycosylation is present at Asn-180. Ser-239 is modified (phosphoserine).

It belongs to the chondromodulin-1 family. Highly expressed in tendons.

Its subcellular location is the membrane. The protein localises to the nucleus envelope. Functionally, may be an angiogenesis inhibitor. The chain is Tenomodulin (Tnmd) from Rattus norvegicus (Rat).